The primary structure comprises 227 residues: uncharacterized protein (227 aa).

The next 7 membrane-spanning stretches (helical) occupy residues 15–34 (FIAA…FLIY), 55–77 (TFLF…ASGV), 92–114 (AFSM…YSLL), 121–140 (FPGE…TSLL), 145–167 (LVFL…VNYS), 180–202 (PLYI…FLPL), and 206–224 (FAIY…YRVL).

It is found in the cell membrane. This is an uncharacterized protein from Archaeoglobus fulgidus (strain ATCC 49558 / DSM 4304 / JCM 9628 / NBRC 100126 / VC-16).